The chain runs to 707 residues: DNA topoisomerase 1 (707 aa).

In terms of domain architecture, Toprim spans 1–140 (MYAILAEKPS…IKRLWTSSMT (140 aa)). The Topo IA-type catalytic domain maps to 157-596 (TLPLYYQAKA…HSKKLSSVLF (440 aa)). The segment at 199–204 (SLGRVQ) is interaction with DNA. Y323 serves as the catalytic O-(5'-phospho-DNA)-tyrosine intermediate.

The protein belongs to the type IA topoisomerase family. As to quaternary structure, monomer.

The catalysed reaction is ATP-independent breakage of single-stranded DNA, followed by passage and rejoining.. Functionally, releases the supercoiling and torsional tension of DNA, which is introduced during the DNA replication and transcription, by transiently cleaving and rejoining one strand of the DNA duplex. Introduces a single-strand break via transesterification at a target site in duplex DNA. The scissile phosphodiester is attacked by the catalytic tyrosine of the enzyme, resulting in the formation of a DNA-(5'-phosphotyrosyl)-enzyme intermediate and the expulsion of a 3'-OH DNA strand. The free DNA strand then undergoes passage around the unbroken strand, thus removing DNA supercoils. Finally, in the religation step, the DNA 3'-OH attacks the covalent intermediate to expel the active-site tyrosine and restore the DNA phosphodiester backbone. The sequence is that of DNA topoisomerase 1 (topA) from Alkalihalophilus pseudofirmus (strain ATCC BAA-2126 / JCM 17055 / OF4) (Bacillus pseudofirmus).